Reading from the N-terminus, the 431-residue chain is Adenylosuccinate synthetase (431 aa).

GTP is bound by residues 13–19 and 41–43; these read GDEGKGK and GHT. Asp14 serves as the catalytic Proton acceptor. Mg(2+) is bound by residues Asp14 and Gly41. Residues 14-17, 39-42, Thr130, Arg144, Gln225, Thr240, and Arg304 contribute to the IMP site; these read DEGK and NAGH. Catalysis depends on His42, which acts as the Proton donor. 300 to 306 is a binding site for substrate; it reads TTTGRSR. GTP contacts are provided by residues Arg306, 332–334, and 414–416; these read KLD and STG.

The protein belongs to the adenylosuccinate synthetase family. In terms of assembly, homodimer. It depends on Mg(2+) as a cofactor.

Its subcellular location is the cytoplasm. The enzyme catalyses IMP + L-aspartate + GTP = N(6)-(1,2-dicarboxyethyl)-AMP + GDP + phosphate + 2 H(+). It functions in the pathway purine metabolism; AMP biosynthesis via de novo pathway; AMP from IMP: step 1/2. Its function is as follows. Plays an important role in the de novo pathway of purine nucleotide biosynthesis. Catalyzes the first committed step in the biosynthesis of AMP from IMP. The chain is Adenylosuccinate synthetase from Marinobacter nauticus (strain ATCC 700491 / DSM 11845 / VT8) (Marinobacter aquaeolei).